The chain runs to 445 residues: Tubulin beta chain (445 aa).

GTP-binding residues include Gln-11, Glu-69, Ser-138, Gly-142, Thr-143, Gly-144, Asn-204, and Asn-226. Glu-69 lines the Mg(2+) pocket.

The protein belongs to the tubulin family. As to quaternary structure, dimer of alpha and beta chains. A typical microtubule is a hollow water-filled tube with an outer diameter of 25 nm and an inner diameter of 15 nM. Alpha-beta heterodimers associate head-to-tail to form protofilaments running lengthwise along the microtubule wall with the beta-tubulin subunit facing the microtubule plus end conferring a structural polarity. Microtubules usually have 13 protofilaments but different protofilament numbers can be found in some organisms and specialized cells. It depends on Mg(2+) as a cofactor.

It is found in the cytoplasm. The protein resides in the cytoskeleton. Tubulin is the major constituent of microtubules, a cylinder consisting of laterally associated linear protofilaments composed of alpha- and beta-tubulin heterodimers. Microtubules grow by the addition of GTP-tubulin dimers to the microtubule end, where a stabilizing cap forms. Below the cap, tubulin dimers are in GDP-bound state, owing to GTPase activity of alpha-tubulin. In Coprinopsis cinerea (strain Okayama-7 / 130 / ATCC MYA-4618 / FGSC 9003) (Inky cap fungus), this protein is Tubulin beta chain.